Here is a 744-residue protein sequence, read N- to C-terminus: Integrator complex subunit 11 homolog (744 aa).

Positions 67, 69, 71, 72, 156, and 177 each coordinate Zn(2+). An HXHXDH motif motif is present at residues H67–H72. Residue E202 is part of the active site. H425 lines the Zn(2+) pocket. The disordered stretch occupies residues N626 to N669.

Belongs to the metallo-beta-lactamase superfamily. RNA-metabolizing metallo-beta-lactamase-like family. INTS11 subfamily. In terms of assembly, component of the Integrator complex. The core complex associates with protein phosphatase 2A subunits, to form the Integrator-PP2A (INTAC) complex. Requires Zn(2+) as cofactor.

It localises to the nucleus. It is found in the cytoplasm. Functionally, RNA endonuclease component of the integrator complex, a multiprotein complex that terminates RNA polymerase II (Pol II) transcription in the promoter-proximal region of genes. The integrator complex provides a quality checkpoint during transcription elongation by driving premature transcription termination of transcripts that are unfavorably configured for transcriptional elongation: the complex terminates transcription by (1) catalyzing dephosphorylation of the C-terminal domain (CTD) of Pol II subunit polr2a, (2) degrading the exiting nascent RNA transcript via endonuclease activity and (3) promoting the release of Pol II from bound DNA. The integrator complex is also involved in terminating the synthesis of non-coding Pol II transcripts, such as enhancer RNAs (eRNAs), small nuclear RNAs (snRNAs), telomerase RNAs and long non-coding RNAs (lncRNAs). Within the integrator complex, INTS11 constitutes the RNA endonuclease subunit that degrades exiting nascent RNA transcripts. In Dictyostelium discoideum (Social amoeba), this protein is Integrator complex subunit 11 homolog (ints11).